Here is a 331-residue protein sequence, read N- to C-terminus: Pantothenate kinase (331 aa).

Residue 109–116 (GSVAVGKS) participates in ATP binding.

It belongs to the prokaryotic pantothenate kinase family.

The protein localises to the cytoplasm. The catalysed reaction is (R)-pantothenate + ATP = (R)-4'-phosphopantothenate + ADP + H(+). It functions in the pathway cofactor biosynthesis; coenzyme A biosynthesis; CoA from (R)-pantothenate: step 1/5. The protein is Pantothenate kinase of Rhizobium etli (strain CIAT 652).